The primary structure comprises 308 residues: GTPase Era (308 aa).

Residues 7–181 (RCGWVALIGP…LRLIVGYMPE (175 aa)) enclose the Era-type G domain. A G1 region spans residues 15-22 (GPPNAGKS). Residue 15-22 (GPPNAGKS) participates in GTP binding. Residues 41 to 45 (QTTRN) are G2. Positions 62–65 (DTPG) are G3. Residues 62–66 (DTPGI) and 130–133 (NKID) contribute to the GTP site. Positions 130–133 (NKID) are G4. The tract at residues 160-162 (ASA) is G5. The region spanning 212–290 (LRQELPYSTA…HLELWVKVRE (79 aa)) is the KH type-2 domain.

It belongs to the TRAFAC class TrmE-Era-EngA-EngB-Septin-like GTPase superfamily. Era GTPase family. Monomer.

Its subcellular location is the cytoplasm. It is found in the cell inner membrane. Functionally, an essential GTPase that binds both GDP and GTP, with rapid nucleotide exchange. Plays a role in 16S rRNA processing and 30S ribosomal subunit biogenesis and possibly also in cell cycle regulation and energy metabolism. This is GTPase Era from Nitratidesulfovibrio vulgaris (strain DP4) (Desulfovibrio vulgaris).